A 257-amino-acid polypeptide reads, in one-letter code: Protein CUSTOS (257 aa).

The segment covering 1-11 has biased composition (low complexity); that stretch reads MSDLESSSSSS. The tract at residues 1–72 is disordered; sequence MSDLESSSSS…HEQDGNELQT (72 aa). The span at 32 to 41 shows a compositional bias: basic and acidic residues; the sequence is QRPRGPEKPG. The residue at position 55 (S55) is a Phosphoserine. The residue at position 73 (T73) is a Phosphothreonine. 2 disordered regions span residues 120 to 157 and 170 to 257; these read FTSIPGGPEKEAAPQPCRKRLPSSSSSDDGDEELRRCR and SAIH…VPSN. 2 stretches are compositionally biased toward basic residues: residues 180-190 and 227-237; these read KKKKRKLKKKA and TKKKKRKKKTK. The short motif at 228–236 is the Nucleolar localization signal (NLS) element; sequence KKKKRKKKT.

This sequence belongs to the CUSTOS family.

The protein resides in the nucleus envelope. In terms of biological role, plays a role in the regulation of Wnt signaling pathway during early development. In Bos taurus (Bovine), this protein is Protein CUSTOS.